Consider the following 186-residue polypeptide: Elongation factor P (186 aa).

The protein belongs to the elongation factor P family.

Its subcellular location is the cytoplasm. Its pathway is protein biosynthesis; polypeptide chain elongation. Involved in peptide bond synthesis. Stimulates efficient translation and peptide-bond synthesis on native or reconstituted 70S ribosomes in vitro. Probably functions indirectly by altering the affinity of the ribosome for aminoacyl-tRNA, thus increasing their reactivity as acceptors for peptidyl transferase. The sequence is that of Elongation factor P from Brucella ovis (strain ATCC 25840 / 63/290 / NCTC 10512).